A 2069-amino-acid chain; its full sequence is Dedicator of cytokinesis protein 9 (2069 aa).

Residues Ser-21, Ser-32, Ser-167, and Ser-170 each carry the phosphoserine modification. Positions 174–281 (GITKHGWLYK…WITILNKILQ (108 aa)) constitute a PH domain. The interval 290 to 313 (EKRNGDSHEDDEQSKLEGSGSGLD) is disordered. A phosphoserine mark is found at Ser-433 and Ser-443. The 179-residue stretch at 640-818 (TNHLYVYPKY…PLLKISTHLV (179 aa)) folds into the C2 DOCK-type domain. A phosphoserine mark is found at Ser-927 and Ser-1235. Thr-1241 bears the Phosphothreonine mark. The tract at residues 1241-1282 (TPNINSVRNADSRGSLISTDSGNSLPERNSEKSNSLDKHQQS) is disordered. Phosphoserine occurs at positions 1255, 1261, and 1264. A compositionally biased stretch (polar residues) spans 1255 to 1267 (SLISTDSGNSLPE). Over residues 1268–1280 (RNSEKSNSLDKHQ) the composition is skewed to basic and acidic residues. In terms of domain architecture, DOCKER spans 1605-2069 (KSYASTPELR…LSEIMHEQLG (465 aa)). The segment at 1693–2069 (DEEASMMEDV…LSEIMHEQLG (377 aa)) is interaction with CDC42. Coiled-coil stretches lie at residues 1948–1982 (IEVA…KLQG) and 2034–2067 (NERL…MHEQ).

This sequence belongs to the DOCK family. As to quaternary structure, homodimer. Interacts preferentially with nucleotide-depleted CDC42. In terms of tissue distribution, widely expressed, with highest expression in heart and placenta. Expressed at intermediate level in kidney, brain, lung and skeletal muscle.

Its subcellular location is the endomembrane system. Guanine nucleotide-exchange factor (GEF) that activates CDC42 by exchanging bound GDP for free GTP. Overexpression induces filopodia formation. The polypeptide is Dedicator of cytokinesis protein 9 (Homo sapiens (Human)).